A 98-amino-acid chain; its full sequence is Feather beta keratin (98 aa).

S2 is modified (N-acetylserine).

This sequence belongs to the avian keratin family. The avian keratins (F-ker, S-ker, C-ker and B-ker) are a complex mixture of very similar polypeptides.

In Mycteria americana (Wood stork), this protein is Feather beta keratin.